A 201-amino-acid chain; its full sequence is Putative 3-methyladenine DNA glycosylase (201 aa).

The protein belongs to the DNA glycosylase MPG family.

In Rhodopseudomonas palustris (strain HaA2), this protein is Putative 3-methyladenine DNA glycosylase.